Consider the following 180-residue polypeptide: GTP cyclohydrolase 1 (180 aa).

Zn(2+)-binding residues include Cys71, His74, and Cys142.

The protein belongs to the GTP cyclohydrolase I family. In terms of assembly, homomer.

The catalysed reaction is GTP + H2O = 7,8-dihydroneopterin 3'-triphosphate + formate + H(+). It functions in the pathway cofactor biosynthesis; 7,8-dihydroneopterin triphosphate biosynthesis; 7,8-dihydroneopterin triphosphate from GTP: step 1/1. The polypeptide is GTP cyclohydrolase 1 (Helicobacter pylori (strain Shi470)).